Here is a 430-residue protein sequence, read N- to C-terminus: Phosphomethylpyrimidine synthase (430 aa).

Substrate is bound by residues asparagine 67, methionine 96, tyrosine 125, histidine 161, 183-185 (SRG), 224-227 (DALR), and glutamate 263. Histidine 267 contributes to the Zn(2+) binding site. A substrate-binding site is contributed by tyrosine 290. Histidine 331 lines the Zn(2+) pocket. Residues cysteine 406, cysteine 409, and cysteine 413 each coordinate [4Fe-4S] cluster.

It belongs to the ThiC family. Homodimer. The cofactor is [4Fe-4S] cluster.

It carries out the reaction 5-amino-1-(5-phospho-beta-D-ribosyl)imidazole + S-adenosyl-L-methionine = 4-amino-2-methyl-5-(phosphooxymethyl)pyrimidine + CO + 5'-deoxyadenosine + formate + L-methionine + 3 H(+). The protein operates within cofactor biosynthesis; thiamine diphosphate biosynthesis. In terms of biological role, catalyzes the synthesis of the hydroxymethylpyrimidine phosphate (HMP-P) moiety of thiamine from aminoimidazole ribotide (AIR) in a radical S-adenosyl-L-methionine (SAM)-dependent reaction. The protein is Phosphomethylpyrimidine synthase of Campylobacter jejuni subsp. doylei (strain ATCC BAA-1458 / RM4099 / 269.97).